Reading from the N-terminus, the 752-residue chain is uncharacterized protein (752 aa).

Serine 202 and serine 582 each carry phosphoserine. Positions 596–752 (EEEKESVEVE…KTGEDGEIVL (157 aa)) are disordered. 2 stretches are compositionally biased toward basic and acidic residues: residues 601–613 (SVEV…KNDL) and 641–677 (LKSE…HFEV). Positions 695–718 (NNVAETILEVTSSPKSSENSQKQS) are enriched in polar residues. A phosphoserine mark is found at serine 707 and serine 738.

This is an uncharacterized protein from Schizosaccharomyces pombe (strain 972 / ATCC 24843) (Fission yeast).